Reading from the N-terminus, the 217-residue chain is 3,4-dihydroxy-2-butanone 4-phosphate synthase (217 aa).

Residues 37-38 (RE), Asp42, 150-154 (RGGHT), and Glu174 each bind D-ribulose 5-phosphate. A Mg(2+)-binding site is contributed by Glu38. Residue His153 coordinates Mg(2+).

The protein belongs to the DHBP synthase family. Homodimer. The cofactor is Mg(2+). Mn(2+) serves as cofactor.

The enzyme catalyses D-ribulose 5-phosphate = (2S)-2-hydroxy-3-oxobutyl phosphate + formate + H(+). The protein operates within cofactor biosynthesis; riboflavin biosynthesis; 2-hydroxy-3-oxobutyl phosphate from D-ribulose 5-phosphate: step 1/1. Functionally, catalyzes the conversion of D-ribulose 5-phosphate to formate and 3,4-dihydroxy-2-butanone 4-phosphate. The chain is 3,4-dihydroxy-2-butanone 4-phosphate synthase from Enterobacter sp. (strain 638).